We begin with the raw amino-acid sequence, 302 residues long: tRNA dimethylallyltransferase (302 aa).

9 to 16 (GPTGTGKS) contributes to the ATP binding site. 11 to 16 (TGTGKS) serves as a coordination point for substrate.

This sequence belongs to the IPP transferase family. In terms of assembly, monomer. The cofactor is Mg(2+).

The enzyme catalyses adenosine(37) in tRNA + dimethylallyl diphosphate = N(6)-dimethylallyladenosine(37) in tRNA + diphosphate. Catalyzes the transfer of a dimethylallyl group onto the adenine at position 37 in tRNAs that read codons beginning with uridine, leading to the formation of N6-(dimethylallyl)adenosine (i(6)A). This Mycolicibacterium smegmatis (strain ATCC 700084 / mc(2)155) (Mycobacterium smegmatis) protein is tRNA dimethylallyltransferase.